The following is a 500-amino-acid chain: Chromosomal replication initiator protein DnaA (500 aa).

The disordered stretch occupies residues 1–37 (MSDTPFGDADHPRPAPIHPDAVLPPPMSSQSADNDPT). A domain I, interacts with DnaA modulators region spans residues 1–103 (MSDTPFGDAD…EELLSDHFHK (103 aa)). Pro residues predominate over residues 14–27 (PAPIHPDAVLPPPM). Positions 103–161 (KAIHLAITIDPDLELALGAPDHEDEEEEVPPAQFVPKVTVGVTEPSARPTTTIDDDEGN) are domain II. Residues 162–378 (RLNPKYTFDS…GALIRVTAFA (217 aa)) form a domain III, AAA+ region region. ATP contacts are provided by G206, G208, K209, and T210. Residues 379–500 (SLNQQPVDIS…SEITNRIKQY (122 aa)) are domain IV, binds dsDNA.

Belongs to the DnaA family. Oligomerizes as a right-handed, spiral filament on DNA at oriC.

The protein resides in the cytoplasm. Its function is as follows. Plays an essential role in the initiation and regulation of chromosomal replication. ATP-DnaA binds to the origin of replication (oriC) to initiate formation of the DNA replication initiation complex once per cell cycle. Binds the DnaA box (a 9 base pair repeat at the origin) and separates the double-stranded (ds)DNA. Forms a right-handed helical filament on oriC DNA; dsDNA binds to the exterior of the filament while single-stranded (ss)DNA is stabiized in the filament's interior. The ATP-DnaA-oriC complex binds and stabilizes one strand of the AT-rich DNA unwinding element (DUE), permitting loading of DNA polymerase. After initiation quickly degrades to an ADP-DnaA complex that is not apt for DNA replication. Binds acidic phospholipids. The polypeptide is Chromosomal replication initiator protein DnaA (Cutibacterium acnes (strain DSM 16379 / KPA171202) (Propionibacterium acnes)).